The chain runs to 280 residues: Dolichyl-diphosphooligosaccharide--protein glycosyltransferase subunit 2 (280 aa).

The signal sequence occupies residues 1-16 (MKLLLVLLTIASVALA). The Lumenal segment spans residues 17-187 (AVDDVAVNNF…FRQPEKRPSA (171 aa)). The chain crosses the membrane as a helical span at residues 188–208 (LISDLFTIICLSPLLILVVLW). Residues 209–222 (SQVGINFQNAPASP) lie on the Cytoplasmic side of the membrane. Residues 223-243 (WVPIFHVGLIGIFGIYFMFWV) traverse the membrane as a helical segment. Position 244 (Gln244) is a topological domain, lumenal. Residues 245–265 (FDMFVTLKYLAVLGFLTFVAG) form a helical membrane-spanning segment. Topologically, residues 266-280 (NRVLRAISESKQKSE) are cytoplasmic.

It belongs to the SWP1 family. Component of the oligosaccharyltransferase (OST) complex.

It is found in the endoplasmic reticulum membrane. It functions in the pathway protein modification; protein glycosylation. In terms of biological role, subunit of the oligosaccharyl transferase (OST) complex that catalyzes the initial transfer of a defined glycan (Glc(3)Man(9)GlcNAc(2) in eukaryotes) from the lipid carrier dolichol-pyrophosphate to an asparagine residue within an Asn-X-Ser/Thr consensus motif in nascent polypeptide chains, the first step in protein N-glycosylation. N-glycosylation occurs cotranslationally and the complex associates with the Sec61 complex at the channel-forming translocon complex that mediates protein translocation across the endoplasmic reticulum (ER). All subunits are required for a maximal enzyme activity. This is Dolichyl-diphosphooligosaccharide--protein glycosyltransferase subunit 2 from Caenorhabditis elegans.